A 619-amino-acid polypeptide reads, in one-letter code: Putative zinc transporter At3g08650 (619 aa).

15 helical membrane-spanning segments follow: residues 25-45 (MMHS…VVFI), 102-122 (VALF…PFFF), 129-149 (WAGI…FDLV), 155-175 (HGSG…IWLC), 198-218 (VVLV…GVGV), 230-250 (LLVT…VSMV), 261-281 (AMLW…PAFL), 289-309 (FLPF…IAEV), 354-374 (GFFV…FLVA), 383-403 (HALL…WRPL), 405-425 (LLLS…IGAG), 465-485 (LLAC…LGVA), 528-548 (AAAL…LAGI), 552-572 (GLDH…WQVI), and 585-605 (VGMV…RLVC).

The protein belongs to the ZIP transporter (TC 2.A.5) family. ZupT subfamily.

It localises to the membrane. Its function is as follows. May transport zinc. This chain is Putative zinc transporter At3g08650, found in Arabidopsis thaliana (Mouse-ear cress).